The primary structure comprises 177 residues: Large ribosomal subunit protein uL6 (177 aa).

It belongs to the universal ribosomal protein uL6 family. As to quaternary structure, part of the 50S ribosomal subunit.

Its function is as follows. This protein binds to the 23S rRNA, and is important in its secondary structure. It is located near the subunit interface in the base of the L7/L12 stalk, and near the tRNA binding site of the peptidyltransferase center. The protein is Large ribosomal subunit protein uL6 of Neisseria meningitidis serogroup C (strain 053442).